The chain runs to 513 residues: GMP synthase [glutamine-hydrolyzing] (513 aa).

The Glutamine amidotransferase type-1 domain maps to 3-200; that stretch reads SVLVLDFGSQ…LINIAGIRPD (198 aa). Catalysis depends on cysteine 80, which acts as the Nucleophile. Residues histidine 174 and glutamate 176 contribute to the active site. The GMPS ATP-PPase domain occupies 201 to 388; it reads WSSKSFIEHQ…LGIPEDILMR (188 aa). ATP is bound at residue 228-234; sequence SGGVDST.

Homodimer.

It catalyses the reaction XMP + L-glutamine + ATP + H2O = GMP + L-glutamate + AMP + diphosphate + 2 H(+). It participates in purine metabolism; GMP biosynthesis; GMP from XMP (L-Gln route): step 1/1. Catalyzes the synthesis of GMP from XMP. The protein is GMP synthase [glutamine-hydrolyzing] of Chlorobium luteolum (strain DSM 273 / BCRC 81028 / 2530) (Pelodictyon luteolum).